Consider the following 127-residue polypeptide: Large ribosomal subunit protein uL18 (127 aa).

The interval 1–26 (MASTLTVRKSLSDRAKARARRQARGR) is disordered. Positions 17 to 26 (ARARRQARGR) are enriched in basic residues.

This sequence belongs to the universal ribosomal protein uL18 family. Part of the 50S ribosomal subunit; part of the 5S rRNA/L5/L18/L25 subcomplex. Contacts the 5S and 23S rRNAs.

In terms of biological role, this is one of the proteins that bind and probably mediate the attachment of the 5S RNA into the large ribosomal subunit, where it forms part of the central protuberance. The protein is Large ribosomal subunit protein uL18 of Cutibacterium acnes (strain DSM 16379 / KPA171202) (Propionibacterium acnes).